The chain runs to 1038 residues: Rap guanine nucleotide exchange factor 1 (1038 aa).

10-140 (RLSPLHTFSD…DILTDETPSD (131 aa)) provides a ligand contact to a nucleoside 3',5'-cyclic phosphate. A DEP domain is found at 234-316 (TDNHQVIRDI…KTNSYYRWVQ (83 aa)). Residue 375–492 (ALSHLSTMVK…VRLKDYGEDV (118 aa)) coordinates a nucleoside 3',5'-cyclic phosphate. The region spanning 516–654 (CGYSVMAGKA…DILTRIGSIR (139 aa)) is the N-terminal Ras-GEF domain. In terms of domain architecture, Ras-GEF spans 795–1028 (DSQELAHQLF…MQLSYEIEPK (234 aa)).

Interacts (via C-terminus) with drn-1. Expressed specifically in neurons including the nerve ring, ventral and dorsal nerve cord motor neurons and tail ganglia.

In terms of biological role, guanine nucleotide-releasing protein. Together with GTPase drn-1, may regulate acetylcholine release at the neuromuscular junctions probably downstream of G-protein gsa-1 and adenylate cyclase acy-1. The protein is Rap guanine nucleotide exchange factor 1 (epac-1) of Caenorhabditis elegans.